The following is a 590-amino-acid chain: Aspartate--tRNA(Asp/Asn) ligase (590 aa).

An L-aspartate-binding site is contributed by E176. An aspartate region spans residues 200-203 (QLFK). L-aspartate contacts are provided by R222 and H451. 222 to 224 (RDE) serves as a coordination point for ATP. An ATP-binding site is contributed by E485. R492 is an L-aspartate binding site. 537 to 540 (GIDR) is an ATP binding site.

The protein belongs to the class-II aminoacyl-tRNA synthetase family. Type 1 subfamily. As to quaternary structure, homodimer.

The protein localises to the cytoplasm. The catalysed reaction is tRNA(Asx) + L-aspartate + ATP = L-aspartyl-tRNA(Asx) + AMP + diphosphate. Its function is as follows. Aspartyl-tRNA synthetase with relaxed tRNA specificity since it is able to aspartylate not only its cognate tRNA(Asp) but also tRNA(Asn). Reaction proceeds in two steps: L-aspartate is first activated by ATP to form Asp-AMP and then transferred to the acceptor end of tRNA(Asp/Asn). The sequence is that of Aspartate--tRNA(Asp/Asn) ligase from Ehrlichia chaffeensis (strain ATCC CRL-10679 / Arkansas).